A 360-amino-acid polypeptide reads, in one-letter code: Vitopine synthase (360 aa).

Belongs to the lysopine/nopaline/octopine/opine/vitopine dehydrogenases family.

The polypeptide is Vitopine synthase (vis) (Allorhizobium ampelinum (strain ATCC BAA-846 / DSM 112012 / S4) (Agrobacterium vitis (strain S4))).